A 387-amino-acid chain; its full sequence is Exodeoxyribonuclease 7 large subunit (387 aa).

The protein belongs to the XseA family. As to quaternary structure, heterooligomer composed of large and small subunits.

It is found in the cytoplasm. The catalysed reaction is Exonucleolytic cleavage in either 5'- to 3'- or 3'- to 5'-direction to yield nucleoside 5'-phosphates.. Bidirectionally degrades single-stranded DNA into large acid-insoluble oligonucleotides, which are then degraded further into small acid-soluble oligonucleotides. The polypeptide is Exodeoxyribonuclease 7 large subunit (Campylobacter jejuni subsp. doylei (strain ATCC BAA-1458 / RM4099 / 269.97)).